A 406-amino-acid polypeptide reads, in one-letter code: Tryptophan synthase beta chain (406 aa).

At lysine 99 the chain carries N6-(pyridoxal phosphate)lysine.

This sequence belongs to the TrpB family. Tetramer of two alpha and two beta chains. The cofactor is pyridoxal 5'-phosphate.

The catalysed reaction is (1S,2R)-1-C-(indol-3-yl)glycerol 3-phosphate + L-serine = D-glyceraldehyde 3-phosphate + L-tryptophan + H2O. The protein operates within amino-acid biosynthesis; L-tryptophan biosynthesis; L-tryptophan from chorismate: step 5/5. In terms of biological role, the beta subunit is responsible for the synthesis of L-tryptophan from indole and L-serine. Essential for production of nod factors and establishment of symbiosis. In Rhizobium etli (strain ATCC 51251 / DSM 11541 / JCM 21823 / NBRC 15573 / CFN 42), this protein is Tryptophan synthase beta chain.